Consider the following 470-residue polypeptide: Glutamate--tRNA ligase 2 (470 aa).

Positions 11–21 (PSPTGHLHLGG) match the 'HIGH' region motif. Residues 238 to 242 (KLSKR) carry the 'KMSKS' region motif. Lys241 contacts ATP.

Belongs to the class-I aminoacyl-tRNA synthetase family. Glutamate--tRNA ligase type 1 subfamily. In terms of assembly, monomer.

The protein resides in the cytoplasm. The enzyme catalyses tRNA(Glu) + L-glutamate + ATP = L-glutamyl-tRNA(Glu) + AMP + diphosphate. Functionally, catalyzes the attachment of glutamate to tRNA(Glu) in a two-step reaction: glutamate is first activated by ATP to form Glu-AMP and then transferred to the acceptor end of tRNA(Glu). This Ehrlichia ruminantium (strain Welgevonden) protein is Glutamate--tRNA ligase 2.